The sequence spans 91 residues: Small ribosomal subunit protein bS16 (91 aa).

Belongs to the bacterial ribosomal protein bS16 family.

The protein is Small ribosomal subunit protein bS16 of Staphylococcus haemolyticus (strain JCSC1435).